The following is a 307-amino-acid chain: 4-hydroxythreonine-4-phosphate dehydrogenase (307 aa).

Substrate contacts are provided by His-121 and Thr-122. The a divalent metal cation site is built by His-150, His-189, and His-246. 3 residues coordinate substrate: Lys-254, Asn-263, and Arg-272.

Belongs to the PdxA family. As to quaternary structure, homodimer. It depends on Zn(2+) as a cofactor. The cofactor is Mg(2+). Co(2+) serves as cofactor.

Its subcellular location is the cytoplasm. The catalysed reaction is 4-(phosphooxy)-L-threonine + NAD(+) = 3-amino-2-oxopropyl phosphate + CO2 + NADH. It participates in cofactor biosynthesis; pyridoxine 5'-phosphate biosynthesis; pyridoxine 5'-phosphate from D-erythrose 4-phosphate: step 4/5. Catalyzes the NAD(P)-dependent oxidation of 4-(phosphooxy)-L-threonine (HTP) into 2-amino-3-oxo-4-(phosphooxy)butyric acid which spontaneously decarboxylates to form 3-amino-2-oxopropyl phosphate (AHAP). The sequence is that of 4-hydroxythreonine-4-phosphate dehydrogenase from Campylobacter fetus subsp. fetus (strain 82-40).